Here is a 415-residue protein sequence, read N- to C-terminus: WD-40 repeat-containing protein MSI2 (415 aa).

WD repeat units lie at residues 166 to 206 (GHDK…QDKV), 215 to 255 (GHES…MQHQ), 258 to 298 (VHER…APLH), 302 to 342 (SHEG…EEQL), and 361 to 401 (GHKA…YRDE). A DWD box motif is present at residues 232–248 (LFGSAGEDGRLVIWDTR).

The protein belongs to the WD repeat RBAP46/RBAP48/MSI1 family.

Its subcellular location is the nucleus. Its function is as follows. Core histone-binding subunit that may target chromatin assembly factors, chromatin remodeling factors and histone deacetylases to their histone substrates in a manner that is regulated by nucleosomal DNA. The protein is WD-40 repeat-containing protein MSI2 (MSI2) of Arabidopsis thaliana (Mouse-ear cress).